A 389-amino-acid chain; its full sequence is Phosphopentomutase (389 aa).

Residues D9, D282, H287, D323, H324, and H335 each coordinate Mn(2+).

The protein belongs to the phosphopentomutase family. The cofactor is Mn(2+).

It localises to the cytoplasm. It carries out the reaction 2-deoxy-alpha-D-ribose 1-phosphate = 2-deoxy-D-ribose 5-phosphate. It catalyses the reaction alpha-D-ribose 1-phosphate = D-ribose 5-phosphate. Its pathway is carbohydrate degradation; 2-deoxy-D-ribose 1-phosphate degradation; D-glyceraldehyde 3-phosphate and acetaldehyde from 2-deoxy-alpha-D-ribose 1-phosphate: step 1/2. Its function is as follows. Isomerase that catalyzes the conversion of deoxy-ribose 1-phosphate (dRib-1-P) and ribose 1-phosphate (Rib-1-P) to deoxy-ribose 5-phosphate (dRib-5-P) and ribose 5-phosphate (Rib-5-P), respectively. This is Phosphopentomutase from Kosmotoga olearia (strain ATCC BAA-1733 / DSM 21960 / TBF 19.5.1).